Reading from the N-terminus, the 344-residue chain is Polycomb group RING finger protein 2 (344 aa).

The segment at 18-57 adopts an RING-type zinc-finger fold; sequence CALCGGYFIDATTIVECLHSFCKTCIVRYLETNKYCPMCD. Residues K51 and K88 each participate in a glycyl lysine isopeptide (Lys-Gly) (interchain with G-Cter in SUMO2) cross-link. The short motif at 81 to 95 is the Nuclear localization signal element; sequence KLVPGLFKDEMKRRR. Residues 240–253 show a composition bias toward polar residues; the sequence is TVPTPSEGTNTSGA. Positions 240 to 344 are disordered; the sequence is TVPTPSEGTN…VNGAPVPPLT (105 aa). The segment covering 263-313 has biased composition (low complexity); sequence APSPATLPATSSSLPSPATPSHGSPSSHGPPATHPTSPTPPSTASGATTAA. Residues 314 to 328 are compositionally biased toward polar residues; that stretch reads NGGSLNCLQTPSSTS. T344 bears the Phosphothreonine mark.

Exists as both a monomer and homodimer. Component of a PRC1-like complex. Interacts with CBX8, RING1 and RNF2. Interacts with CBX7. Interacts with PHC2. Phosphorylated. Homodimer formation is regulated by phosphorylation with only unphosphorylated proteins forming homodimers. In terms of tissue distribution, detected in all tissues examined with high expression found in placenta lung and kidney and low expression, in liver, pancreas and skeletal muscle.

It localises to the nucleus. Transcriptional repressor. Binds specifically to the DNA sequence 5'-GACTNGACT-3'. Has tumor suppressor activity. May play a role in control of cell proliferation and/or neural cell development. Regulates proliferation of early T progenitor cells by maintaining expression of HES1. Also plays a role in antero-posterior specification of the axial skeleton and negative regulation of the self-renewal activity of hematopoietic stem cells. Component of a Polycomb group (PcG) multiprotein PRC1-like complex, a complex class required to maintain the transcriptionally repressive state of many genes, including Hox genes, throughout development. PcG PRC1 complex acts via chromatin remodeling and modification of histones; it mediates monoubiquitination of histone H2A 'Lys-119', rendering chromatin heritably changed in its expressibility. Within the PRC1-like complex, regulates RNF2 ubiquitin ligase activity. The protein is Polycomb group RING finger protein 2 (PCGF2) of Homo sapiens (Human).